Reading from the N-terminus, the 549-residue chain is Membrane protein insertase YidC (549 aa).

A helical membrane pass occupies residues 8–28 (VLLATVLSVAVLIVWQFVFPS). Residues 29 to 39 (PKPKPQPPKPP) are compositionally biased toward pro residues. Residues 29–68 (PKPKPQPPKPPEAAQRAEAPAAPAPGQPAAQAPAPAVPQD) form a disordered region. Low complexity-rich tracts occupy residues 40-49 (EAAQRAEAPA) and 55-68 (QPAAQAPAPAVPQD). 4 helical membrane passes run 328 to 348 (IDYGAMARPFAFFARLLLFVM), 354 to 374 (LVANWGLAIILLTVLVKVLLY), 424 to 444 (LGGCLPMLIQLPIWFALYATL), and 502 to 522 (PGFFTLLMLSVPAGLTLYIFV).

It belongs to the OXA1/ALB3/YidC family. Type 1 subfamily. Interacts with the Sec translocase complex via SecD. Specifically interacts with transmembrane segments of nascent integral membrane proteins during membrane integration.

Its subcellular location is the cell inner membrane. Required for the insertion and/or proper folding and/or complex formation of integral membrane proteins into the membrane. Involved in integration of membrane proteins that insert both dependently and independently of the Sec translocase complex, as well as at least some lipoproteins. Aids folding of multispanning membrane proteins. The chain is Membrane protein insertase YidC from Anaeromyxobacter sp. (strain Fw109-5).